Here is a 211-residue protein sequence, read N- to C-terminus: Proteasome subunit beta (211 aa).

Positions 1 to 8 are cleaved as a propeptide — removed in mature form; by autocatalysis; the sequence is MNQTLETG. Thr9 (nucleophile) is an active-site residue.

It belongs to the peptidase T1B family. As to quaternary structure, the 20S proteasome core is composed of 14 alpha and 14 beta subunits that assemble into four stacked heptameric rings, resulting in a barrel-shaped structure. The two inner rings, each composed of seven catalytic beta subunits, are sandwiched by two outer rings, each composed of seven alpha subunits. The catalytic chamber with the active sites is on the inside of the barrel. Has a gated structure, the ends of the cylinder being occluded by the N-termini of the alpha-subunits. Is capped at one or both ends by the proteasome regulatory ATPase, PAN.

It is found in the cytoplasm. It carries out the reaction Cleavage of peptide bonds with very broad specificity.. With respect to regulation, the formation of the proteasomal ATPase PAN-20S proteasome complex, via the docking of the C-termini of PAN into the intersubunit pockets in the alpha-rings, triggers opening of the gate for substrate entry. Interconversion between the open-gate and close-gate conformations leads to a dynamic regulation of the 20S proteasome proteolysis activity. Its function is as follows. Component of the proteasome core, a large protease complex with broad specificity involved in protein degradation. The T.acidophilum proteasome is able to cleave oligopeptides after Tyr, Leu, Phe, and to a lesser extent after Glu and Arg. Thus, displays chymotrypsin-like activity and low level of caspase-like and trypsin-like activities. The polypeptide is Proteasome subunit beta (Thermoplasma acidophilum (strain ATCC 25905 / DSM 1728 / JCM 9062 / NBRC 15155 / AMRC-C165)).